The primary structure comprises 472 residues: Forkhead box protein H1 (472 aa).

A disordered region spans residues 36 to 56 (SSKRSCHRSSNPLLELGGRLD). Positions 97-193 (KPPYSYLAMI…LKRQNTAVSR (97 aa)) form a DNA-binding region, fork-head. 2 disordered regions span residues 211–246 (YSQP…RPKL) and 261–360 (PASS…LPTS). A compositionally biased stretch (pro residues) spans 219–239 (PLPPESSLPPVPTRQSPPPSE). Positions 294 to 310 (ASYNGSSSASSVSPASD) are enriched in low complexity. Positions 339–465 (SCPPPNKSSK…PNQYALQNGP (127 aa)) are SMAD-interaction domain (SID). The Fast/FoxH1 motif 1 (FM1) motif lies at 357-361 (LPTSY). A Fast/FoxH1 motif 2 (FM2) motif is present at residues 367 to 373 (PNAVAPP). An SMAD interaction motif (SIM) motif is present at residues 428 to 448 (LDSMLQSVPPNKSVFDALGSN).

The protein localises to the nucleus. In terms of biological role, transcriptional activator. Activates an activin response element (ARE). Recognizes and binds to the DNA sequence 5'-TGT[GT][GT]ATT-3'. Modulator of nodal signaling required for organizer formation. Also required for the development of dorsal axial structures and left-right symmetry. This chain is Forkhead box protein H1 (foxh1), found in Danio rerio (Zebrafish).